Consider the following 357-residue polypeptide: Histidinol-phosphate aminotransferase (357 aa).

Lys-212 bears the N6-(pyridoxal phosphate)lysine mark.

The protein belongs to the class-II pyridoxal-phosphate-dependent aminotransferase family. Histidinol-phosphate aminotransferase subfamily. In terms of assembly, homodimer. Pyridoxal 5'-phosphate serves as cofactor.

It catalyses the reaction L-histidinol phosphate + 2-oxoglutarate = 3-(imidazol-4-yl)-2-oxopropyl phosphate + L-glutamate. It participates in amino-acid biosynthesis; L-histidine biosynthesis; L-histidine from 5-phospho-alpha-D-ribose 1-diphosphate: step 7/9. The chain is Histidinol-phosphate aminotransferase from Pectobacterium atrosepticum (strain SCRI 1043 / ATCC BAA-672) (Erwinia carotovora subsp. atroseptica).